The primary structure comprises 490 residues: Cytochrome P450 71B29 (490 aa).

Residues 1–21 (MAIILCFLILLPLILIFLKKL) form a helical membrane-spanning segment. C440 provides a ligand contact to heme.

The protein belongs to the cytochrome P450 family. The cofactor is heme.

The protein resides in the membrane. The chain is Cytochrome P450 71B29 (CYP71B29) from Arabidopsis thaliana (Mouse-ear cress).